A 292-amino-acid polypeptide reads, in one-letter code: Calcium-binding protein CBP (292 aa).

The interval 1 to 80 (MAGYPPNPGS…YGSGGGYGAP (80 aa)) is disordered. The span at 12-21 (YPYGGAGGYG) shows a compositional bias: gly residues. A compositionally biased stretch (pro residues) spans 22–40 (APPPPYGSSPAPSAPPYGA). 2 consecutive EF-hand domains span residues 121–156 (GTDP…YSQS) and 187–222 (YSLQ…LGYS). The Ca(2+) site is built by Asp134, Asp136, Ser138, Met140, Glu145, Asp200, Asp202, Ser204, Lys206, and Glu211.

Potential calcium sensor. The protein is Calcium-binding protein CBP of Oryza sativa subsp. japonica (Rice).